The following is a 331-amino-acid chain: Phenylalanine--tRNA ligase alpha subunit (331 aa).

Glu258 provides a ligand contact to Mg(2+).

This sequence belongs to the class-II aminoacyl-tRNA synthetase family. Phe-tRNA synthetase alpha subunit type 1 subfamily. In terms of assembly, tetramer of two alpha and two beta subunits. Mg(2+) serves as cofactor.

The protein resides in the cytoplasm. The enzyme catalyses tRNA(Phe) + L-phenylalanine + ATP = L-phenylalanyl-tRNA(Phe) + AMP + diphosphate + H(+). The protein is Phenylalanine--tRNA ligase alpha subunit (pheS) of Synechocystis sp. (strain ATCC 27184 / PCC 6803 / Kazusa).